The primary structure comprises 1828 residues: Dedicator of cytokinesis protein 2 (1828 aa).

The 62-residue stretch at 8 to 69 (DKERHGVAIY…PTSFIHLKEV (62 aa)) folds into the SH3 domain. At Lys304 the chain carries N6-acetyllysine. One can recognise a C2 DOCK-type domain in the interval 423 to 607 (RNDIYITLLQ…DVFSISTLVC (185 aa)). Phosphoserine occurs at positions 588 and 593. Lys738 is modified (N6-acetyllysine). One can recognise a DOCKER domain in the interval 1210-1621 (YKDNNREEMY…VEKEYGVREM (412 aa)). A disordered region spans residues 1652–1703 (SDCSTPSKVPAESFDLESAPPKTPKVEEEPISPGSTLPEVKLRRSKKRTKRS). 4 positions are modified to phosphoserine: Ser1683, Ser1704, Ser1729, and Ser1782.

Belongs to the DOCK family. Homodimer. Interacts with RAC1 and RAC2. Interacts with CRKL and VAV. Interacts with CD3Z. Specifically expressed in hematopoietic cells.

It localises to the endomembrane system. Its subcellular location is the cytoplasm. It is found in the cytoskeleton. In terms of biological role, involved in cytoskeletal rearrangements required for lymphocyte migration in response of chemokines. Activates RAC1 and RAC2, but not CDC42, by functioning as a guanine nucleotide exchange factor (GEF), which exchanges bound GDP for free GTP. May also participate in IL2 transcriptional activation via the activation of RAC2. The polypeptide is Dedicator of cytokinesis protein 2 (Dock2) (Mus musculus (Mouse)).